Here is a 509-residue protein sequence, read N- to C-terminus: 2,3-bisphosphoglycerate-independent phosphoglycerate mutase (509 aa).

Mn(2+) is bound by residues Asp-14 and Ser-64. Ser-64 acts as the Phosphoserine intermediate in catalysis. Substrate is bound by residues His-125, 155–156, Arg-187, Arg-193, 259–262, and Lys-332; these read RD and RADR. Asp-399, His-403, Asp-440, His-441, and His-459 together coordinate Mn(2+).

The protein belongs to the BPG-independent phosphoglycerate mutase family. As to quaternary structure, monomer. It depends on Mn(2+) as a cofactor.

It catalyses the reaction (2R)-2-phosphoglycerate = (2R)-3-phosphoglycerate. Its pathway is carbohydrate degradation; glycolysis; pyruvate from D-glyceraldehyde 3-phosphate: step 3/5. In terms of biological role, catalyzes the interconversion of 2-phosphoglycerate and 3-phosphoglycerate. The sequence is that of 2,3-bisphosphoglycerate-independent phosphoglycerate mutase from Psychromonas ingrahamii (strain DSM 17664 / CCUG 51855 / 37).